The sequence spans 380 residues: Cytochrome b (380 aa).

The next 4 helical transmembrane spans lie at 34-54 (SGSLLGLCLVVQILTGIFLAM), 78-99 (WFLRYVHANGVSLFFICMYCHI), 114-134 (WNVGVILFLVTILTAFMGYVL), and 179-199 (FFPFHFLFPFIIAALAVIHLV). Positions 84 and 98 each coordinate heme b. Heme b-binding residues include histidine 183 and histidine 197. Histidine 202 contributes to the a ubiquinone binding site. The next 4 helical transmembrane spans lie at 227–247 (TKDTVGFILLVAALFSLALLF), 289–309 (LGGVIALVAAILVLFLMPLLN), 321–341 (LSQAAFWLLVAHLFILTWIGS), and 348–369 (YVLLGQVASVLYFSLFIFGFPI).

This sequence belongs to the cytochrome b family. As to quaternary structure, the main subunits of complex b-c1 are: cytochrome b, cytochrome c1 and the Rieske protein. Heme b serves as cofactor.

The protein localises to the mitochondrion inner membrane. Its function is as follows. Component of the ubiquinol-cytochrome c reductase complex (complex III or cytochrome b-c1 complex) that is part of the mitochondrial respiratory chain. The b-c1 complex mediates electron transfer from ubiquinol to cytochrome c. Contributes to the generation of a proton gradient across the mitochondrial membrane that is then used for ATP synthesis. The sequence is that of Cytochrome b (MT-CYB) from Strongylocentrotus purpuratus (Purple sea urchin).